A 635-amino-acid chain; its full sequence is Sodium- and chloride-dependent creatine transporter 1 (635 aa).

A disordered region spans residues Met-1–Asp-35. The Cytoplasmic segment spans residues Met-1–Asp-60. Low complexity predominate over residues Pro-25–Asp-35. The helical transmembrane segment at Phe-61–Leu-81 threads the bilayer. The Extracellular portion of the chain corresponds to Cys-82 to Gly-87. Residues Gly-88–Leu-108 traverse the membrane as a helical segment. The Cytoplasmic portion of the chain corresponds to Glu-109–Met-138. A helical transmembrane segment spans residues Val-139–Leu-159. At Val-160–Ala-230 the chain is on the extracellular side. 2 N-linked (GlcNAc...) asparagine glycosylation sites follow: Asn-192 and Asn-197. The chain crosses the membrane as a helical span at residues Leu-231–Trp-251. At Lys-252–Tyr-269 the chain is on the cytoplasmic side. Residues Val-270–Ile-290 form a helical membrane-spanning segment. The Extracellular segment spans residues Tyr-291 to Gln-304. Residues Val-305–Thr-325 traverse the membrane as a helical segment. Topologically, residues Ala-326–Ala-341 are cytoplasmic. A helical transmembrane segment spans residues Ile-342–Ile-362. The Extracellular portion of the chain corresponds to Leu-363–Thr-394. Residues Leu-395–Leu-415 traverse the membrane as a helical segment. Topologically, residues Asp-416–Glu-444 are cytoplasmic. Residues Ile-445–Ala-465 traverse the membrane as a helical segment. Over Gly-466 to Ser-479 the chain is Extracellular. A helical transmembrane segment spans residues Gly-480 to Ala-500. Residues Asp-501 to Lys-520 are Cytoplasmic-facing. The chain crosses the membrane as a helical span at residues Trp-521–Tyr-541. Topologically, residues Tyr-542–Met-560 are extracellular. Asn-548 carries an N-linked (GlcNAc...) asparagine glycan. A helical transmembrane segment spans residues Gly-561–Leu-581. Residues Arg-582 to Met-635 lie on the Cytoplasmic side of the membrane. Thr-617 and Thr-620 each carry phosphothreonine. A Phosphoserine modification is found at Ser-623.

This sequence belongs to the sodium:neurotransmitter symporter (SNF) (TC 2.A.22) family. SLC6A8 subfamily. In terms of processing, glycosylated. In terms of tissue distribution, prominent in kidney, heart, and muscle, also present in brain, but not in liver and intestine.

It is found in the cell membrane. It localises to the apical cell membrane. The catalysed reaction is creatine(out) + chloride(out) + 2 Na(+)(out) = creatine(in) + chloride(in) + 2 Na(+)(in). In terms of biological role, creatine:sodium symporter which mediates the uptake of creatine. Plays an important role in supplying creatine to the brain via the blood-brain barrier. The polypeptide is Sodium- and chloride-dependent creatine transporter 1 (SLC6A8) (Oryctolagus cuniculus (Rabbit)).